A 415-amino-acid chain; its full sequence is uncharacterized protein (415 aa).

Cys-66, Cys-72, Cys-75, and Cys-149 together coordinate [4Fe-4S] cluster. Residues Gln-249, Phe-276, Glu-296, and Asp-344 each contribute to the S-adenosyl-L-methionine site. Residue Cys-370 is the Nucleophile of the active site.

Belongs to the class I-like SAM-binding methyltransferase superfamily. RNA M5U methyltransferase family.

This is an uncharacterized protein from Brucella melitensis biotype 1 (strain ATCC 23456 / CCUG 17765 / NCTC 10094 / 16M).